The primary structure comprises 154 residues: UPF0225 protein YpsIP31758_1970 (154 aa).

Belongs to the UPF0225 family.

The protein is UPF0225 protein YpsIP31758_1970 of Yersinia pseudotuberculosis serotype O:1b (strain IP 31758).